Consider the following 792-residue polypeptide: Xaa-Pro dipeptidyl-peptidase (792 aa).

Catalysis depends on charge relay system residues Ser-363, Asp-482, and His-513.

This sequence belongs to the peptidase S15 family. Homodimer.

It is found in the cytoplasm. The enzyme catalyses Hydrolyzes Xaa-Pro-|- bonds to release unblocked, N-terminal dipeptides from substrates including Ala-Pro-|-p-nitroanilide and (sequentially) Tyr-Pro-|-Phe-Pro-|-Gly-Pro-|-Ile.. Functionally, removes N-terminal dipeptides sequentially from polypeptides having unsubstituted N-termini provided that the penultimate residue is proline. This Lactobacillus delbrueckii subsp. lactis protein is Xaa-Pro dipeptidyl-peptidase (pepX).